The primary structure comprises 527 residues: Glutamyl-tRNA reductase 1, chloroplastic (527 aa).

A chloroplast-targeting transit peptide spans 1–43 (MAGATSATAAAGAFAAAKARGPAAACPWLVAAGGRRRSGVVRC). Residues 124–127 (TCNR), S184, 189–191 (EGQ), and Q195 each bind substrate. The active-site Nucleophile is C125. 266–271 (GAGKMG) is an NADP(+) binding site.

It belongs to the glutamyl-tRNA reductase family. Homodimer.

The protein resides in the plastid. It localises to the chloroplast. It carries out the reaction (S)-4-amino-5-oxopentanoate + tRNA(Glu) + NADP(+) = L-glutamyl-tRNA(Glu) + NADPH + H(+). It functions in the pathway porphyrin-containing compound metabolism; protoporphyrin-IX biosynthesis; 5-aminolevulinate from L-glutamyl-tRNA(Glu): step 1/2. Functionally, catalyzes the NADPH-dependent reduction of glutamyl-tRNA(Glu) to glutamate 1-semialdehyde (GSA). In Hordeum vulgare (Barley), this protein is Glutamyl-tRNA reductase 1, chloroplastic (HEMA1).